Here is a 137-residue protein sequence, read N- to C-terminus: Large ribosomal subunit protein uL16 (137 aa).

The protein belongs to the universal ribosomal protein uL16 family. In terms of assembly, part of the 50S ribosomal subunit.

Its function is as follows. Binds 23S rRNA and is also seen to make contacts with the A and possibly P site tRNAs. The polypeptide is Large ribosomal subunit protein uL16 (Mycoplasma capricolum subsp. capricolum (strain California kid / ATCC 27343 / NCTC 10154)).